The primary structure comprises 579 residues: Arginine--tRNA ligase (579 aa).

The 'HIGH' region signature appears at proline 123–histidine 133.

This sequence belongs to the class-I aminoacyl-tRNA synthetase family. In terms of assembly, monomer.

The protein resides in the cytoplasm. It carries out the reaction tRNA(Arg) + L-arginine + ATP = L-arginyl-tRNA(Arg) + AMP + diphosphate. In Cellvibrio japonicus (strain Ueda107) (Pseudomonas fluorescens subsp. cellulosa), this protein is Arginine--tRNA ligase.